Consider the following 93-residue polypeptide: Alpha-defensin 23 (93 aa).

Positions 1-19 (MKTLVLLSALILLAFQVQA) are cleaved as a signal peptide. The propeptide occupies 20-58 (DPIQNTDEETKTEEQPGKEDQAVSVSFGDPEGSSLQEES). The disordered stretch occupies residues 24 to 54 (NTDEETKTEEQPGKEDQAVSVSFGDPEGSSL). Basic and acidic residues predominate over residues 27–40 (EETKTEEQPGKEDQ). Cystine bridges form between Cys64/Cys92, Cys66/Cys81, and Cys71/Cys91.

It belongs to the alpha-defensin family.

Its subcellular location is the secreted. In terms of biological role, may have microbicidal activities. This is Alpha-defensin 23 (Defa23) from Mus musculus (Mouse).